A 301-amino-acid polypeptide reads, in one-letter code: Glycine--tRNA ligase alpha subunit (301 aa).

Belongs to the class-II aminoacyl-tRNA synthetase family. Tetramer of two alpha and two beta subunits.

It localises to the cytoplasm. It carries out the reaction tRNA(Gly) + glycine + ATP = glycyl-tRNA(Gly) + AMP + diphosphate. This chain is Glycine--tRNA ligase alpha subunit, found in Shewanella baltica (strain OS223).